We begin with the raw amino-acid sequence, 331 residues long: uncharacterized protein (331 aa).

7 Pentapeptide repeat domains span residues 20 to 59, 60 to 99, 100 to 139, 151 to 190, 191 to 230, 231 to 270, and 271 to 310; these read LKLP…NLGQ, ANLV…ILRD, SDMT…NMRQ, AILG…DLRK, ADLS…KISE, AEMT…DLSR, and ANLT…DLMS.

This is an uncharacterized protein from Synechocystis sp. (strain ATCC 27184 / PCC 6803 / Kazusa).